We begin with the raw amino-acid sequence, 274 residues long: Receptor-like protein 44 (274 aa).

Residues 1–24 (MTRSHRLLLLLLLIFQTAQRLTTA) form the signal peptide. Over 25–223 (DPNDEACLKN…PLQEMMMKSK (199 aa)) the chain is Extracellular. 3 N-linked (GlcNAc...) asparagine glycosylation sites follow: asparagine 48, asparagine 82, and asparagine 95. LRR repeat units lie at residues 96-121 (CTNLQSLDLSSNQISGVIPPEIQYLV), 123-144 (LAVLNLSSNHLSGEITPQLALC), 145-168 (AYLNVIDLHDNELSGQIPQQLGLL), and 169-192 (ARLSAFDVSNNKLSGQIPTYLSNR). N-linked (GlcNAc...) asparagine glycosylation occurs at asparagine 127. N-linked (GlcNAc...) asparagine glycans are attached at residues asparagine 191 and asparagine 200. The chain crosses the membrane as a helical span at residues 224 to 244 (GLSVMAIVGIGLGSGIASLMI). At 245–274 (SFTGVCLWLRITEKKIVEEEGKISQSMPDY) the chain is on the cytoplasmic side.

This sequence belongs to the RLP family.

Its subcellular location is the cell membrane. This chain is Receptor-like protein 44, found in Arabidopsis thaliana (Mouse-ear cress).